We begin with the raw amino-acid sequence, 300 residues long: Protein XRI1 (300 aa).

As to quaternary structure, interacts (via C-terminal domain) with MIP1.

It localises to the nucleus. In terms of biological role, required for mitotic division of the generative cell nucleus and the development of mature tricellular pollen grains, and for male and female meiosis. In Arabidopsis thaliana (Mouse-ear cress), this protein is Protein XRI1 (XRI1).